Reading from the N-terminus, the 39-residue chain is Photosystem II reaction center protein L (39 aa).

A helical transmembrane segment spans residues 18–38; sequence SLYLGLLSVFVLGILFSSYFF.

Belongs to the PsbL family. In terms of assembly, PSII is composed of 1 copy each of membrane proteins PsbA, PsbB, PsbC, PsbD, PsbE, PsbF, PsbH, PsbI, PsbJ, PsbK, PsbL, PsbM, PsbT, PsbX, PsbY, Psb30/Ycf12, peripheral proteins PsbO, CyanoQ (PsbQ), PsbU, PsbV and a large number of cofactors. It forms dimeric complexes.

It localises to the cellular thylakoid membrane. In terms of biological role, one of the components of the core complex of photosystem II (PSII). PSII is a light-driven water:plastoquinone oxidoreductase that uses light energy to abstract electrons from H(2)O, generating O(2) and a proton gradient subsequently used for ATP formation. It consists of a core antenna complex that captures photons, and an electron transfer chain that converts photonic excitation into a charge separation. This subunit is found at the monomer-monomer interface and is required for correct PSII assembly and/or dimerization. The polypeptide is Photosystem II reaction center protein L (Prochlorococcus marinus (strain MIT 9301)).